The primary structure comprises 337 residues: Ribonucleoside-diphosphate reductase small chain (337 aa).

Aspartate 85, glutamate 116, and histidine 119 together coordinate Fe cation. The active site involves tyrosine 123. Fe cation is bound by residues glutamate 178, glutamate 212, and histidine 215.

Belongs to the ribonucleoside diphosphate reductase small chain family. In terms of assembly, heterodimer of a large and a small subunit. It depends on Fe cation as a cofactor.

It catalyses the reaction a 2'-deoxyribonucleoside 5'-diphosphate + [thioredoxin]-disulfide + H2O = a ribonucleoside 5'-diphosphate + [thioredoxin]-dithiol. Its function is as follows. Provides the precursors necessary for DNA synthesis. Catalyzes the biosynthesis of deoxyribonucleotides from the corresponding ribonucleotides. This chain is Ribonucleoside-diphosphate reductase small chain (RNR2), found in Trypanosoma brucei brucei.